The primary structure comprises 230 residues: UPF0173 metal-dependent hydrolase Pden_0574 (230 aa).

It belongs to the UPF0173 family.

This chain is UPF0173 metal-dependent hydrolase Pden_0574, found in Paracoccus denitrificans (strain Pd 1222).